A 359-amino-acid polypeptide reads, in one-letter code: Bergaptol O-methyltransferase (359 aa).

H126 serves as a coordination point for bergaptol. S-adenosyl-L-homocysteine contacts are provided by S179, G203, D226, D246, and K260. H264 lines the bergaptol pocket. H264 acts as the Proton acceptor in catalysis.

The protein belongs to the class I-like SAM-binding methyltransferase superfamily. Cation-independent O-methyltransferase family. COMT subfamily.

It catalyses the reaction a 5-hydroxyfurocoumarin + S-adenosyl-L-methionine = a 5-methoxyfurocoumarin + S-adenosyl-L-homocysteine + H(+). It carries out the reaction bergaptol + S-adenosyl-L-methionine = bergapten + S-adenosyl-L-homocysteine. Its activity is regulated as follows. Inhibited by Cu(2+), Ni(2+) and Co(2+). In Glehnia littoralis (Beach silvertop), this protein is Bergaptol O-methyltransferase.